Consider the following 1473-residue polypeptide: G8 domain-containing protein DDB_G0286311 (1473 aa).

The first 21 residues, 1–21 (MKRFFIVILFILLVCIFNVKS), serve as a signal peptide directing secretion. The helical transmembrane segment at 105 to 125 (IVLMIATITGSLLFIRFNIGF) threads the bilayer. N-linked (GlcNAc...) asparagine glycosylation occurs at N126. A helical transmembrane segment spans residues 130 to 150 (TLIILIIGTIFLIGSSHSITL). N-linked (GlcNAc...) asparagine glycosylation is found at N203, N241, and N275. Over residues 298–375 (TGTTPTTTPT…PTTTPTTTPT (78 aa)) the composition is skewed to low complexity. A disordered region spans residues 298 to 400 (TGTTPTTTPT…SSSPSSPSFS (103 aa)). A compositionally biased stretch (polar residues) spans 376–389 (DSCPTTSTWRPTMA). A compositionally biased stretch (low complexity) spans 390–400 (SSSSPSSPSFS). N-linked (GlcNAc...) asparagine glycans are attached at residues N444, N637, N680, N1078, N1088, N1176, N1206, N1225, N1389, and N1424. The G8 domain occupies 626-754 (SIWSSGIVPL…YHNTWSKLST (129 aa)).

The protein belongs to the comF family.

It localises to the membrane. This chain is G8 domain-containing protein DDB_G0286311, found in Dictyostelium discoideum (Social amoeba).